A 341-amino-acid polypeptide reads, in one-letter code: Fructose-1,6-bisphosphatase, cytosolic (341 aa).

The Mg(2+) site is built by Glu71, Glu100, Asp121, Leu123, and Asp124. Residues Asp124–Ser127, Asn215, Tyr247, Tyr267, and Lys277 each bind substrate. Glu283 lines the Mg(2+) pocket.

Belongs to the FBPase class 1 family. Mg(2+) serves as cofactor.

It is found in the cytoplasm. It carries out the reaction beta-D-fructose 1,6-bisphosphate + H2O = beta-D-fructose 6-phosphate + phosphate. The chain is Fructose-1,6-bisphosphatase, cytosolic from Beta vulgaris (Sugar beet).